The primary structure comprises 120 residues: Small ribosomal subunit protein bS16 (120 aa).

Residues 81-120 (GLAKRPARNNPQKAEPGEKSKERAAKRAEKAAAPAEDAAA) form a disordered region. A compositionally biased stretch (basic and acidic residues) spans 95 to 110 (EPGEKSKERAAKRAEK). A compositionally biased stretch (low complexity) spans 111–120 (AAAPAEDAAA).

This sequence belongs to the bacterial ribosomal protein bS16 family.

The polypeptide is Small ribosomal subunit protein bS16 (Methylorubrum populi (strain ATCC BAA-705 / NCIMB 13946 / BJ001) (Methylobacterium populi)).